Consider the following 168-residue polypeptide: 2-oxo-4-hydroxy-4-carboxy-5-ureidoimidazoline decarboxylase (168 aa).

His-70 acts as the Proton donor; for OHCU decarboxylase activity in catalysis. Over residues 70–79 (HPDLGERTEM) the composition is skewed to basic and acidic residues. Residues 70 to 93 (HPDLGERTEMTDASEAEQASAELD) form a disordered region. Residues Pro-71, 83–87 (SEAEQ), and 118–122 (FVMAV) each bind substrate.

This sequence belongs to the OHCU decarboxylase family.

The enzyme catalyses 5-hydroxy-2-oxo-4-ureido-2,5-dihydro-1H-imidazole-5-carboxylate + H(+) = (S)-allantoin + CO2. It functions in the pathway purine metabolism; urate degradation; (S)-allantoin from urate: step 3/3. Its function is as follows. Catalyzes the stereoselective decarboxylation of 2-oxo-4-hydroxy-4-carboxy-5-ureidoimidazoline (OHCU) to (S)-allantoin. The polypeptide is 2-oxo-4-hydroxy-4-carboxy-5-ureidoimidazoline decarboxylase (Haloferax volcanii (strain ATCC 29605 / DSM 3757 / JCM 8879 / NBRC 14742 / NCIMB 2012 / VKM B-1768 / DS2) (Halobacterium volcanii)).